A 247-amino-acid chain; its full sequence is Protein NipSnap homolog 3A (247 aa).

2 positions are modified to N6-acetyllysine: Lys-48 and Lys-166.

It belongs to the NipSnap family.

Its subcellular location is the cytoplasm. It localises to the cytosol. This chain is Protein NipSnap homolog 3A (NIPSNAP3A), found in Pongo abelii (Sumatran orangutan).